The sequence spans 195 residues: MTPMLLSAFWTYTLITALTPGPNNILALSAATAHGFRQSIRVLAGMSLGFLVVMLLCAGIAFSLAVIDPAIIHLLSWVGAAYILWLAWKIATSPAADENARPKPVGFWVSFGLQFVNVKIILYGITALSTFVLPQTQALNWVIGVSILLALIGTFGNVCWALAGHLFQRAFRHYGRQLNIILALLLVYCAVRIFY.

Residues 1–9 are Periplasmic-facing; the sequence is MTPMLLSAF. The chain crosses the membrane as a helical span at residues 10–32; that stretch reads WTYTLITALTPGPNNILALSAAT. At 33 to 46 the chain is on the cytoplasmic side; that stretch reads AHGFRQSIRVLAGM. A helical membrane pass occupies residues 47 to 67; sequence SLGFLVVMLLCAGIAFSLAVI. Topologically, residues 68 to 69 are periplasmic; the sequence is DP. The helical transmembrane segment at 70–90 threads the bilayer; sequence AIIHLLSWVGAAYILWLAWKI. At 91-104 the chain is on the cytoplasmic side; the sequence is ATSPAADENARPKP. A helical membrane pass occupies residues 105–125; that stretch reads VGFWVSFGLQFVNVKIILYGI. The Periplasmic segment spans residues 126–141; sequence TALSTFVLPQTQALNW. The helical transmembrane segment at 142–162 threads the bilayer; sequence VIGVSILLALIGTFGNVCWAL. Residues 163-176 lie on the Cytoplasmic side of the membrane; that stretch reads AGHLFQRAFRHYGR. A helical membrane pass occupies residues 177-194; that stretch reads QLNIILALLLVYCAVRIF. Y195 is a topological domain (periplasmic).

This sequence belongs to the Rht family.

It is found in the cell inner membrane. The enzyme catalyses O-acetyl-L-serine(in) = O-acetyl-L-serine(out). The catalysed reaction is L-cysteine(in) = L-cysteine(out). In terms of biological role, exporter of O-acetylserine (OAS) and cysteine. The protein is Cysteine/O-acetylserine efflux protein (eamB) of Salmonella choleraesuis (strain SC-B67).